The chain runs to 200 residues: Holliday junction resolvase RecU (200 aa).

A disordered region spans residues 1 to 25; the sequence is MTIRYPNGKRYNQASQPHKTPIKKH. Positions 85, 87, 100, and 119 each coordinate Mg(2+).

The protein belongs to the RecU family. Mg(2+) serves as cofactor.

The protein resides in the cytoplasm. The enzyme catalyses Endonucleolytic cleavage at a junction such as a reciprocal single-stranded crossover between two homologous DNA duplexes (Holliday junction).. In terms of biological role, endonuclease that resolves Holliday junction intermediates in genetic recombination. Cleaves mobile four-strand junctions by introducing symmetrical nicks in paired strands. Promotes annealing of linear ssDNA with homologous dsDNA. Required for DNA repair, homologous recombination and chromosome segregation. The sequence is that of Holliday junction resolvase RecU from Bacillus cereus (strain ZK / E33L).